Reading from the N-terminus, the 104-residue chain is DNA-directed RNA polymerase subunit omega (104 aa).

The protein belongs to the RNA polymerase subunit omega family. In terms of assembly, the RNAP catalytic core consists of 2 alpha, 1 beta, 1 beta' and 1 omega subunit. When a sigma factor is associated with the core the holoenzyme is formed, which can initiate transcription.

The enzyme catalyses RNA(n) + a ribonucleoside 5'-triphosphate = RNA(n+1) + diphosphate. In terms of biological role, promotes RNA polymerase assembly. Latches the N- and C-terminal regions of the beta' subunit thereby facilitating its interaction with the beta and alpha subunits. The polypeptide is DNA-directed RNA polymerase subunit omega (Streptococcus agalactiae serotype Ia (strain ATCC 27591 / A909 / CDC SS700)).